Reading from the N-terminus, the 258-residue chain is Snake venom serine protease BPA (258 aa).

The N-terminal stretch at 1-18 (MVLIRVIANLLILQLSNA) is a signal peptide. The propeptide occupies 19–24 (QKSSEL). In terms of domain architecture, Peptidase S1 spans 25-249 (VIGGDECNIT…YLPWIQSIIA (225 aa)). Cystine bridges form between cysteine 31–cysteine 163, cysteine 50–cysteine 66, cysteine 98–cysteine 256, cysteine 142–cysteine 210, cysteine 174–cysteine 189, and cysteine 200–cysteine 225. N-linked (GlcNAc...) asparagine glycosylation is found at asparagine 32 and asparagine 44. Histidine 65 (charge relay system) is an active-site residue. The N-linked (GlcNAc...) asparagine glycan is linked to asparagine 103. Aspartate 110 (charge relay system) is an active-site residue. The N-linked (GlcNAc...) asparagine glycan is linked to asparagine 121. O-linked (GalNAc...) serine glycosylation is present at serine 133. N-linked (GlcNAc...) asparagine glycosylation is found at asparagine 154 and asparagine 170. Serine 204 functions as the Charge relay system in the catalytic mechanism. Asparagine 211 and asparagine 251 each carry an N-linked (GlcNAc...) asparagine glycan. Threonine 255 carries an O-linked (GalNAc...) threonine glycan.

Belongs to the peptidase S1 family. Snake venom subfamily. In terms of assembly, monomer. N- and O-glycosylated. The glycosylation has a stabilizing effect on the protein. However, the removal of part of the carbohydrates enhances the proteolytic activity of the SVSP towards human and rat fibrinogen. As to expression, expressed by the venom gland.

The protein localises to the secreted. Its activity is regulated as follows. Inhibited by diisopropylfluorophosphate (DFP), but not by SBTI, Antithrombin III/heparin and BPTI, probably due to steric hindrance caused by its huge carbohydrate moietie. Its function is as follows. Snake venom serine protease that has a potent and selective fibrinogenolytic activity. Preferentially cleaves the alpha-chain (FGA) of human and rat fibrinogen at Arg-|-Gly bonds, and slowly digests the beta-chain (FGB). In vivo, completely avoids thrombus formation induced in rat, decreases the fibrinogen plasma level and prolonges the recalcification time. Possesses esterolytic and amidolytic activities. The chain is Snake venom serine protease BPA from Bothrops jararaca (Jararaca).